Reading from the N-terminus, the 364-residue chain is 3-isopropylmalate dehydrogenase (364 aa).

NAD(+) is bound at residue G78–E91. Residues R99, R109, R138, and D228 each coordinate substrate. Residues D228, D252, and D256 each coordinate Mg(2+). G286–N298 contacts NAD(+).

It belongs to the isocitrate and isopropylmalate dehydrogenases family. LeuB type 1 subfamily. As to quaternary structure, homodimer. Mg(2+) serves as cofactor. The cofactor is Mn(2+).

It localises to the cytoplasm. It carries out the reaction (2R,3S)-3-isopropylmalate + NAD(+) = 4-methyl-2-oxopentanoate + CO2 + NADH. It participates in amino-acid biosynthesis; L-leucine biosynthesis; L-leucine from 3-methyl-2-oxobutanoate: step 3/4. Functionally, catalyzes the oxidation of 3-carboxy-2-hydroxy-4-methylpentanoate (3-isopropylmalate) to 3-carboxy-4-methyl-2-oxopentanoate. The product decarboxylates to 4-methyl-2 oxopentanoate. The polypeptide is 3-isopropylmalate dehydrogenase (Buchnera aphidicola subsp. Uroleucon obscurum).